The sequence spans 65 residues: Large ribosomal subunit protein bL35 (65 aa).

The span at 1–10 (MPKMKTDRGA) shows a compositional bias: basic and acidic residues. The interval 1 to 24 (MPKMKTDRGAAKRFKKTGSGGFKC) is disordered.

Belongs to the bacterial ribosomal protein bL35 family.

The polypeptide is Large ribosomal subunit protein bL35 (Tolumonas auensis (strain DSM 9187 / NBRC 110442 / TA 4)).